We begin with the raw amino-acid sequence, 328 residues long: Phosphate acyltransferase (328 aa).

It belongs to the PlsX family. Homodimer. Probably interacts with PlsY.

It localises to the cytoplasm. The catalysed reaction is a fatty acyl-[ACP] + phosphate = an acyl phosphate + holo-[ACP]. It participates in lipid metabolism; phospholipid metabolism. Its function is as follows. Catalyzes the reversible formation of acyl-phosphate (acyl-PO(4)) from acyl-[acyl-carrier-protein] (acyl-ACP). This enzyme utilizes acyl-ACP as fatty acyl donor, but not acyl-CoA. The protein is Phosphate acyltransferase of Staphylococcus haemolyticus (strain JCSC1435).